We begin with the raw amino-acid sequence, 159 residues long: ATP synthase subunit b (159 aa).

A helical transmembrane segment spans residues 7–27 (TFVWTIINFLLLLVVLSYFLF).

It belongs to the ATPase B chain family. As to quaternary structure, F-type ATPases have 2 components, F(1) - the catalytic core - and F(0) - the membrane proton channel. F(1) has five subunits: alpha(3), beta(3), gamma(1), delta(1), epsilon(1). F(0) has three main subunits: a(1), b(2) and c(10-14). The alpha and beta chains form an alternating ring which encloses part of the gamma chain. F(1) is attached to F(0) by a central stalk formed by the gamma and epsilon chains, while a peripheral stalk is formed by the delta and b chains.

It localises to the cell membrane. F(1)F(0) ATP synthase produces ATP from ADP in the presence of a proton or sodium gradient. F-type ATPases consist of two structural domains, F(1) containing the extramembraneous catalytic core and F(0) containing the membrane proton channel, linked together by a central stalk and a peripheral stalk. During catalysis, ATP synthesis in the catalytic domain of F(1) is coupled via a rotary mechanism of the central stalk subunits to proton translocation. Functionally, component of the F(0) channel, it forms part of the peripheral stalk, linking F(1) to F(0). This Clostridium novyi (strain NT) protein is ATP synthase subunit b.